A 1642-amino-acid polypeptide reads, in one-letter code: Cortactin-binding protein 2 (1642 aa).

Disordered stretches follow at residues 1–27 (MATD…AEAA), 203–222 (KKKT…RSTE), 366–433 (IGAS…HPGL), 446–471 (GSNA…SPTS), and 491–611 (RFTS…PSID). A coiled-coil region spans residues 119 to 276 (RKMQERMSTQ…EQLKRGTDSK (158 aa)). Polar residues predominate over residues 385 to 394 (GPSTGSTADL). Residues 395-407 (TSSPTPVPSTVSP) are compositionally biased toward low complexity. Asymmetric dimethylarginine is present on arginine 491. Pro residues predominate over residues 497-506 (AGAPPRPGAP). The span at 576–586 (TVASPPSTLPQ) shows a compositional bias: polar residues. ANK repeat units follow at residues 702–732 (GRPT…DINY), 736–765 (DGHS…QVNV), 769–798 (NGFT…NINH), 802–831 (GGQT…DRSV), 835–864 (DGWT…PAHG), and 904–934 (EGWT…EPER). A disordered region spans residues 1440 to 1469 (ESGAWRKVSTSPRKKSGRFSSPTWNKPDLS). Serine 1513 carries the phosphoserine modification. Residues 1546–1642 (RRFDSSGNNP…NSRDLEPTQK (97 aa)) form a disordered region. Polar residues-rich tracts occupy residues 1552-1563 (GNNPVFSATVNN) and 1571-1588 (KEVS…SNSK). Positions 1613–1627 (SQNTKRSSSSSNTRQ) are enriched in low complexity.

In terms of assembly, interacts with CTTN/cortactin SH3 domain. Interacts with STRN, STRN4/zinedin and MOB4/phocein; this interactions mediate the association with the STRIPAK core complex and may regulate dendritic spine distribution of the STRIPAK complex in hippocampal neurons. Activation of glutamate receptors weakens the interaction with STRN and STRN4.

The protein resides in the cytoplasm. Its subcellular location is the cell cortex. It is found in the cell projection. It localises to the dendritic spine. Functionally, regulates the dendritic spine distribution of CTTN/cortactin in hippocampal neurons, and thus controls dendritic spinogenesis and dendritic spine maintenance. Associates with the striatin-interacting phosphatase and kinase (STRIPAK) core complex to regulate dendritic spine distribution of the STRIPAK complex in hippocampal neurons. This chain is Cortactin-binding protein 2 (CTTNBP2), found in Muntiacus reevesi (Reeves' muntjac).